Consider the following 642-residue polypeptide: RNA polymerase sigma factor RpoD (642 aa).

The interval 199–228 is disordered; that stretch reads HLETTAPEKPSNDNSDENEDDEESEEDADE. Over residues 212-228 the composition is skewed to acidic residues; sequence NSDENEDDEESEEDADE. The interval 403–473 is sigma-70 factor domain-2; sequence MIQANLRLVI…TRSIADQART (71 aa). An Interaction with polymerase core subunit RpoC motif is present at residues 427-430; sequence DLIQ. Residues 482 to 558 are sigma-70 factor domain-3; the sequence is ETINKMNRIS…DANNVAPADA (77 aa). Residues 571–624 form a sigma-70 factor domain-4 region; it reads ILESLTPREAKVLRMRFGIDMNTDHTLEEVGRQFDVTRERIRQIEAKALRKLRH. Positions 597–616 form a DNA-binding region, H-T-H motif; that stretch reads LEEVGRQFDVTRERIRQIEA.

This sequence belongs to the sigma-70 factor family. RpoD/SigA subfamily. Interacts transiently with the RNA polymerase catalytic core.

It is found in the cytoplasm. Its function is as follows. Sigma factors are initiation factors that promote the attachment of RNA polymerase to specific initiation sites and are then released. This sigma factor is the primary sigma factor during exponential growth. The chain is RNA polymerase sigma factor RpoD from Neisseria gonorrhoeae.